The sequence spans 360 residues: Blue-light-activated histidine kinase 1 (360 aa).

Positions 38-109 (LFLETTQQTR…KLREGIAAER (72 aa)) constitute a PAS domain. Residue Cys-85 is modified to S-4a-FMN cysteine. The 55-residue stretch at 109 to 163 (RYTVVDLLNYRKDGIPFWNAVHVGPIYGEDGTLQYFYGSQWDITDIVAERRKAET) folds into the PAC domain. Phosphohistidine; by autocatalysis is present on His-173. Positions 260-303 (RSVTALGLALHELATNAVKYGALSVDAGRVEISWSREDGDVTLV) are HWE histidine kinase domain.

FMN binds covalently to cysteine after exposure to blue light and this bond is spontaneously broken in the dark.

The catalysed reaction is ATP + protein L-histidine = ADP + protein N-phospho-L-histidine.. Photosensitive kinase that is involved in increased bacterial virulence upon exposure to light. The chain is Blue-light-activated histidine kinase 1 from Erythrobacter litoralis (strain HTCC2594).